The following is a 291-amino-acid chain: uncharacterized protein (291 aa).

The protein belongs to the PhyH family.

This is an uncharacterized protein from Mycobacterium bovis (strain ATCC BAA-935 / AF2122/97).